The sequence spans 118 residues: Large ribosomal subunit protein bL19 (118 aa).

Belongs to the bacterial ribosomal protein bL19 family.

Its function is as follows. This protein is located at the 30S-50S ribosomal subunit interface and may play a role in the structure and function of the aminoacyl-tRNA binding site. This is Large ribosomal subunit protein bL19 from Campylobacter hominis (strain ATCC BAA-381 / DSM 21671 / CCUG 45161 / LMG 19568 / NCTC 13146 / CH001A).